The primary structure comprises 102 residues: Small ribosomal subunit protein eS24 (102 aa).

This sequence belongs to the eukaryotic ribosomal protein eS24 family.

The sequence is that of Small ribosomal subunit protein eS24 from Halorubrum lacusprofundi (strain ATCC 49239 / DSM 5036 / JCM 8891 / ACAM 34).